We begin with the raw amino-acid sequence, 58 residues long: UPF0391 membrane protein GM21_0108 (58 aa).

Helical transmembrane passes span 4-24 (WALIFFIIAIIAAVFGFGGIA) and 33-53 (VLFYLFLVVAVVMLVSALLAG).

Belongs to the UPF0391 family.

It is found in the cell membrane. The chain is UPF0391 membrane protein GM21_0108 from Geobacter sp. (strain M21).